A 189-amino-acid chain; its full sequence is Mediator of RNA polymerase II transcription subunit 10b (189 aa).

The segment at 1 to 22 (MDPTQNTSAGIGGSNGTIRYQT) is disordered.

It belongs to the Mediator complex subunit 10 family. Component of the Mediator complex.

It is found in the nucleus. Functionally, component of the Mediator complex, a coactivator involved in the regulated transcription of nearly all RNA polymerase II-dependent genes. Mediator functions as a bridge to convey information from gene-specific regulatory proteins to the basal RNA polymerase II transcription machinery. The Mediator complex, having a compact conformation in its free form, is recruited to promoters by direct interactions with regulatory proteins and serves for the assembly of a functional preinitiation complex with RNA polymerase II and the general transcription factors. This chain is Mediator of RNA polymerase II transcription subunit 10b (MED10B), found in Arabidopsis thaliana (Mouse-ear cress).